We begin with the raw amino-acid sequence, 185 residues long: Acireductone dioxygenase (185 aa).

Histidine 101, histidine 103, glutamate 107, and histidine 145 together coordinate Fe(2+). Residues histidine 101, histidine 103, glutamate 107, and histidine 145 each coordinate Ni(2+).

Belongs to the acireductone dioxygenase (ARD) family. In terms of assembly, monomer. Requires Fe(2+) as cofactor. Ni(2+) serves as cofactor.

It catalyses the reaction 1,2-dihydroxy-5-(methylsulfanyl)pent-1-en-3-one + O2 = 3-(methylsulfanyl)propanoate + CO + formate + 2 H(+). The catalysed reaction is 1,2-dihydroxy-5-(methylsulfanyl)pent-1-en-3-one + O2 = 4-methylsulfanyl-2-oxobutanoate + formate + 2 H(+). The protein operates within amino-acid biosynthesis; L-methionine biosynthesis via salvage pathway; L-methionine from S-methyl-5-thio-alpha-D-ribose 1-phosphate: step 5/6. Catalyzes 2 different reactions between oxygen and the acireductone 1,2-dihydroxy-3-keto-5-methylthiopentene (DHK-MTPene) depending upon the metal bound in the active site. Fe-containing acireductone dioxygenase (Fe-ARD) produces formate and 2-keto-4-methylthiobutyrate (KMTB), the alpha-ketoacid precursor of methionine in the methionine recycle pathway. Ni-containing acireductone dioxygenase (Ni-ARD) produces methylthiopropionate, carbon monoxide and formate, and does not lie on the methionine recycle pathway. The sequence is that of Acireductone dioxygenase from Synechococcus sp. (strain RCC307).